Reading from the N-terminus, the 356-residue chain is MPIKDYYQILGVSKDATAEEIKKAYRRLAKEYHPDISADENASEKFKEINEAYHILSDEERRKEYDRILKSGDEKSYRDFMEYIQDFLESIWQGMRRSPKPKKGGDVRLKLELTLEEAAFGCEKDIEYERWIDCPTCEGKGYVGKMEKVTCHACEGTGRRVSGIFSFPRPCSVCKGRGFIIKNQCPACSGRGRVAMHSLLRVNVPPGTDEGDVLKVPGKGHTGERGGEAGDLYLRVSLKPHPIFKKVGKDLYMEAFISFPLAVLGGTTKIKTLEGSYQEVFLQPGTECGSTKRLQGLGYPIAGGRGDLIITFRIEVPKNVNSNIRALIEKLAKELGEEGIEYQSGVITKILSLLKL.

Residues 5–69 (DYYQILGVSK…ERRKEYDRIL (65 aa)) form the J domain. Residues 121 to 197 (GCEKDIEYER…CSGRGRVAMH (77 aa)) form a CR-type zinc finger. Positions 134, 137, 151, 154, 171, 174, 185, and 188 each coordinate Zn(2+). CXXCXGXG motif repeat units lie at residues 134–141 (CPTCEGKG), 151–158 (CHACEGTG), 171–178 (CSVCKGRG), and 185–192 (CPACSGRG).

The protein belongs to the DnaJ family. In terms of assembly, homodimer. Requires Zn(2+) as cofactor.

The protein resides in the cytoplasm. In terms of biological role, participates actively in the response to hyperosmotic and heat shock by preventing the aggregation of stress-denatured proteins and by disaggregating proteins, also in an autonomous, DnaK-independent fashion. Unfolded proteins bind initially to DnaJ; upon interaction with the DnaJ-bound protein, DnaK hydrolyzes its bound ATP, resulting in the formation of a stable complex. GrpE releases ADP from DnaK; ATP binding to DnaK triggers the release of the substrate protein, thus completing the reaction cycle. Several rounds of ATP-dependent interactions between DnaJ, DnaK and GrpE are required for fully efficient folding. Also involved, together with DnaK and GrpE, in the DNA replication of plasmids through activation of initiation proteins. The sequence is that of Chaperone protein DnaJ from Hydrogenobacter thermophilus (strain DSM 6534 / IAM 12695 / TK-6).